A 148-amino-acid polypeptide reads, in one-letter code: Myosin light chain 3, skeletal muscle isoform (148 aa).

Threonine 1 bears the N-acetylthreonine mark. EF-hand domains lie at 6 to 41 (DQIE…LGQN) and 82 to 117 (GTYD…LGEK).

In terms of assembly, myosin is a hexamer of 2 heavy chains and 4 light chains.

The sequence is that of Myosin light chain 3, skeletal muscle isoform from Chelon ramada (Thin-lipped grey mullet).